Consider the following 192-residue polypeptide: ATP synthase subunit b 2 (192 aa).

A helical membrane pass occupies residues 39-59 (SGFLAQLIWLALAFGLLYYLM).

It belongs to the ATPase B chain family. As to quaternary structure, F-type ATPases have 2 components, F(1) - the catalytic core - and F(0) - the membrane proton channel. F(1) has five subunits: alpha(3), beta(3), gamma(1), delta(1), epsilon(1). F(0) has three main subunits: a(1), b(2) and c(10-14). The alpha and beta chains form an alternating ring which encloses part of the gamma chain. F(1) is attached to F(0) by a central stalk formed by the gamma and epsilon chains, while a peripheral stalk is formed by the delta and b chains.

It is found in the cell inner membrane. Functionally, f(1)F(0) ATP synthase produces ATP from ADP in the presence of a proton or sodium gradient. F-type ATPases consist of two structural domains, F(1) containing the extramembraneous catalytic core and F(0) containing the membrane proton channel, linked together by a central stalk and a peripheral stalk. During catalysis, ATP synthesis in the catalytic domain of F(1) is coupled via a rotary mechanism of the central stalk subunits to proton translocation. Component of the F(0) channel, it forms part of the peripheral stalk, linking F(1) to F(0). The b'-subunit is a diverged and duplicated form of b found in plants and photosynthetic bacteria. The protein is ATP synthase subunit b 2 (atpF2) of Methylobacterium radiotolerans (strain ATCC 27329 / DSM 1819 / JCM 2831 / NBRC 15690 / NCIMB 10815 / 0-1).